The sequence spans 41 residues: Large ribosomal subunit protein bL36 (41 aa).

The protein belongs to the bacterial ribosomal protein bL36 family.

In Xanthomonas axonopodis pv. citri (strain 306), this protein is Large ribosomal subunit protein bL36.